The following is a 150-amino-acid chain: Large ribosomal subunit protein bL9 (150 aa).

This sequence belongs to the bacterial ribosomal protein bL9 family.

Binds to the 23S rRNA. The sequence is that of Large ribosomal subunit protein bL9 from Wigglesworthia glossinidia brevipalpis.